Reading from the N-terminus, the 605-residue chain is Sodium-independent sulfate anion transporter (605 aa).

Residues 1 to 50 are Extracellular-facing; the sequence is MPSSLKGLGQAWLSSSSMALSACCSVSAWQKRLPVLAWLPRYSLQWLKMD. The chain crosses the membrane as a helical span at residues 51–71; that stretch reads FIAGLSVGLTVIPQALAYAEV. A topological domain (cytoplasmic) is located at residue A72. Residues 73–93 form a helical membrane-spanning segment; the sequence is GLPPQYGLYSAFTGCFVYVFL. Topologically, residues 94–98 are extracellular; sequence GTSRD. The helical transmembrane segment at 99–119 threads the bilayer; that stretch reads VTLGPTAIMSLLVSFYTFHEP. Over 120-122 the chain is Cytoplasmic; it reads AYA. The helical transmembrane segment at 123-143 threads the bilayer; the sequence is VLLTFLSGCIQLAMGLLHLGF. The Extracellular portion of the chain corresponds to 144–146; sequence LLD. The chain crosses the membrane as a helical span at residues 147–167; the sequence is FISCPVIKGFTSAAAIIIGFG. At 168 to 196 the chain is on the cytoplasmic side; the sequence is QIKNLLGLHNIPRQFFLQVYHTFLSVGET. A helical membrane pass occupies residues 197–217; it reads RLGDAILGLVCMVLLLVLKLM. The Extracellular portion of the chain corresponds to 218 to 249; it reads RDRIPPVHPEMPLCVRLSCGLVWTTATARNAL. The chain crosses the membrane as a helical span at residues 250 to 270; the sequence is VVSFAALVAYSFEVTGYQPFI. Over 271-303 the chain is Cytoplasmic; that stretch reads LTGEIAKGLPPVRVPPFSVTMANGTVSFTRMVQ. The chain crosses the membrane as a helical span at residues 304-324; it reads DLGAGLAVVPLIGLLESIAVA. The Extracellular segment spans residues 325 to 340; the sequence is KAFASQNDYHVDANQE. Residues 341–361 form a helical membrane-spanning segment; it reads LLAIGLTNMLGSFVSSYPITG. At 362 to 373 the chain is on the cytoplasmic side; it reads SFGRTAVNAQSG. The chain crosses the membrane as a helical span at residues 374-394; the sequence is VCTPAGGLVTGALVLLSLDYL. The Extracellular segment spans residues 395-397; it reads TSL. The helical transmembrane segment at 398-418 threads the bilayer; that stretch reads FYYIPKAALAAVIIMAVVPLF. The Cytoplasmic segment spans residues 419–447; the sequence is DTKIFGMLWRVKRLDLLPLCATFLLCFWE. A helical transmembrane segment spans residues 448–468; the sequence is VQYGILAGTLVSTLFLLHFVA. Residues 469–605 are Extracellular-facing; the sequence is RPKTQVSEGP…PEHKVTLLTA (137 aa). In terms of domain architecture, STAS spans 479–582; sequence VLILQLASGL…EKAEQYVRQE (104 aa).

It belongs to the SLC26A/SulP transporter (TC 2.A.53) family.

The protein resides in the cell membrane. It localises to the lysosome membrane. It is found in the apical cell membrane. The protein localises to the basolateral cell membrane. It carries out the reaction hydrogencarbonate(in) + chloride(out) = hydrogencarbonate(out) + chloride(in). The enzyme catalyses sulfate(in) + H(+)(in) = sulfate(out) + H(+)(out). The catalysed reaction is oxalate(in) + chloride(out) = oxalate(out) + chloride(in). Sodium-independent anion exchanger mediating bicarbonate, chloride, sulfate and oxalate transport. Exhibits sodium-independent sulfate anion transporter activity that may cooperate with SLC26A2 to mediate DIDS-sensitive sulfate uptake into high endothelial venules endothelial cells (HEVEC). In the kidney, mediates chloride-bicarbonate exchange, facilitating V-ATPase-mediated acid secretion. May function as a chloride channel, playing an important role in moderating chloride homeostasis and neuronal activity in the cerebellum. This chain is Sodium-independent sulfate anion transporter (Slc26a11), found in Cavia porcellus (Guinea pig).